Here is a 389-residue protein sequence, read N- to C-terminus: Succinyl-diaminopimelate desuccinylase (389 aa).

H72 contributes to the Zn(2+) binding site. D74 is an active-site residue. D105 serves as a coordination point for Zn(2+). Residue E144 is the Proton acceptor of the active site. Residues E145, E173, and H362 each coordinate Zn(2+).

Belongs to the peptidase M20A family. DapE subfamily. As to quaternary structure, homodimer. It depends on Zn(2+) as a cofactor. The cofactor is Co(2+).

It catalyses the reaction N-succinyl-(2S,6S)-2,6-diaminopimelate + H2O = (2S,6S)-2,6-diaminopimelate + succinate. The protein operates within amino-acid biosynthesis; L-lysine biosynthesis via DAP pathway; LL-2,6-diaminopimelate from (S)-tetrahydrodipicolinate (succinylase route): step 3/3. Its function is as follows. Catalyzes the hydrolysis of N-succinyl-L,L-diaminopimelic acid (SDAP), forming succinate and LL-2,6-diaminopimelate (DAP), an intermediate involved in the bacterial biosynthesis of lysine and meso-diaminopimelic acid, an essential component of bacterial cell walls. This is Succinyl-diaminopimelate desuccinylase from Nitrobacter hamburgensis (strain DSM 10229 / NCIMB 13809 / X14).